Consider the following 288-residue polypeptide: Ankyrin repeat and SOCS box protein 8 (288 aa).

The residue at position 17 (serine 17) is a Phosphoserine. 4 ANK repeats span residues 52–81, 85–113, 117–146, and 150–179; these read GTLK…EVNA, YNRT…NPNA, NRDT…SVNA, and NNDT…EVRV. An SOCS box domain is found at 235-288; the sequence is QLCEKLTVLCSAPGTLKTLARYTVRRSLGLQYLPDAVKGLPLPASLKEYLLLLE.

The protein belongs to the ankyrin SOCS box (ASB) family. Interacts with TBK1; this interaction promotes TBK1 proteasomal degradation. Phosphorylated by TBK1.

The protein resides in the cytoplasm. It functions in the pathway protein modification; protein ubiquitination. In terms of biological role, may be a substrate-recognition component of a SCF-like ECS (Elongin-Cullin-SOCS-box protein) E3 ubiquitin-protein ligase complex which mediates the ubiquitination and subsequent proteasomal degradation of target proteins. Inhibits IFN-beta production through the IRF3 signaling pathway by targeting TBK1 via 'Lys-48'-linked ubiquitination, leading to its proteasomal degradation. In Pongo abelii (Sumatran orangutan), this protein is Ankyrin repeat and SOCS box protein 8 (ASB8).